Consider the following 54-residue polypeptide: Photosystem II reaction center protein K (54 aa).

A propeptide spanning residues methionine 1 to glycine 17 is cleaved from the precursor. The chain crosses the membrane as a helical span at residues leucine 29–alanine 49.

Belongs to the PsbK family. As to quaternary structure, PSII is composed of 1 copy each of membrane proteins PsbA, PsbB, PsbC, PsbD, PsbE, PsbF, PsbH, PsbI, PsbJ, PsbK, PsbL, PsbM, PsbT, PsbY, PsbZ, Psb30/Ycf12, at least 3 peripheral proteins of the oxygen-evolving complex and a large number of cofactors. It forms dimeric complexes.

It localises to the plastid. It is found in the chloroplast thylakoid membrane. Its function is as follows. One of the components of the core complex of photosystem II (PSII). PSII is a light-driven water:plastoquinone oxidoreductase that uses light energy to abstract electrons from H(2)O, generating O(2) and a proton gradient subsequently used for ATP formation. It consists of a core antenna complex that captures photons, and an electron transfer chain that converts photonic excitation into a charge separation. The polypeptide is Photosystem II reaction center protein K (Euglena gracilis).